We begin with the raw amino-acid sequence, 296 residues long: Enoyl-CoA hydratase ACTT3 (296 aa).

The short motif at 294–296 (PKL) is the Peroxisomal targeting signal type 1 element.

It belongs to the enoyl-CoA hydratase/isomerase family.

It is found in the peroxisome. The enzyme catalyses a (3S)-3-hydroxyacyl-CoA = a (2E)-enoyl-CoA + H2O. It catalyses the reaction a 4-saturated-(3S)-3-hydroxyacyl-CoA = a (3E)-enoyl-CoA + H2O. The protein operates within mycotoxin biosynthesis. Enoyl-CoA hydratase; part of the gene clusters that mediate the biosynthesis of the host-selective toxins (HSTs) ACT-toxins responsible for brown spot of tangerine disease by the tangerine pathotype which affects tangerines and mandarins. ACT-toxins consist of three moieties, 9,10-epoxy-8-hydroxy-9-methyl-decatrienoic acid (EDA), valine and a polyketide. ACT-toxin I is toxic to both citrus and pear; toxin II the 5''-deoxy derivative of ACT-toxin I, is highly toxic to pear and slightly toxic to citrus. On cellular level, ACT-toxins affect plasma membrane of susceptible cells and cause a sudden increase in loss of K(+) after a few minutes of toxin treatment. The acyl-CoA ligase ACTT1, the hydrolase ACTT2, the enoyl-CoA hydratases ACTT3 and ACTT6, and the acyl-CoA synthetase ACTT5 are all involved in the biosynthesis of the AK-, AF- and ACT-toxin common 9,10-epoxy-8-hydroxy-9-methyl-decatrienoic acid (EDA) structural moiety. The exact role of each enzyme, and of additional enzymes identified within the AF-toxin clusters have still to be determined. On the other hand, ACTTS1 to ACTTS4 are specific to the tangerine pathotype. The function of ACTTS3 is to elongate the polyketide chain portion of ACT-toxin that is unique to this toxin. The enoyl-reductase ACTTS2 might complement the missing enoyl-reductase (ER) domain in ACTTS3 in the synthesis of the polyketide portion of ACT-toxin. The roles of the nonribosomal peptide synthetases-related proteins ACTTS1 and ACTTS4 have also still not been elucidated. The chain is Enoyl-CoA hydratase ACTT3 from Alternaria alternata (Alternaria rot fungus).